A 449-amino-acid chain; its full sequence is Hyaluronidase (449 aa).

Residues 1-23 (MYHLWIKCLAAWIFLKRFNGVHV) form the signal peptide. 2 disulfides stabilise this stretch: Cys-47–Cys-340 and Cys-211–Cys-227. Residues Asn-67, Asn-103, and Asn-111 are each glycosylated (N-linked (GlcNAc...) asparagine). The Proton donor role is filled by Glu-135. Residue Asn-153 is glycosylated (N-linked (GlcNAc...) asparagine). A glycan (N-linked (GlcNAc...) asparagine) is linked at Asn-357. 3 disulfide bridges follow: Cys-365/Cys-376, Cys-370/Cys-427, and Cys-429/Cys-438. N-linked (GlcNAc...) asparagine glycosylation is present at Asn-401. An EGF-like domain is found at 427 to 438 (CQCYQGWKGLYC).

The protein belongs to the glycosyl hydrolase 56 family. Monomer. In terms of tissue distribution, expressed by the venom gland.

It is found in the secreted. It carries out the reaction Random hydrolysis of (1-&gt;4)-linkages between N-acetyl-beta-D-glucosamine and D-glucuronate residues in hyaluronate.. Snake venom endo-hyaluronidase that degrades hyaluronan to smaller oligosaccharide fragments. In venom, it is not toxic by itself, but increases the diffusion of other venom proteins by degrading the extracellular matrix. In addition, it displays antiedematogenic activity. The chain is Hyaluronidase from Crotalus adamanteus (Eastern diamondback rattlesnake).